Here is a 463-residue protein sequence, read N- to C-terminus: Glycine--tRNA ligase (463 aa).

Positions 98 and 174 each coordinate substrate. ATP is bound by residues 206 to 208 (RNE), 216 to 221 (FRTREF), 290 to 291 (EL), and 334 to 337 (GADR). 221-225 (FEQME) provides a ligand contact to substrate. 330–334 (EPSLG) lines the substrate pocket.

Belongs to the class-II aminoacyl-tRNA synthetase family. As to quaternary structure, homodimer.

It localises to the cytoplasm. The enzyme catalyses tRNA(Gly) + glycine + ATP = glycyl-tRNA(Gly) + AMP + diphosphate. Catalyzes the attachment of glycine to tRNA(Gly). The polypeptide is Glycine--tRNA ligase (Staphylococcus saprophyticus subsp. saprophyticus (strain ATCC 15305 / DSM 20229 / NCIMB 8711 / NCTC 7292 / S-41)).